We begin with the raw amino-acid sequence, 264 residues long: Indole-3-glycerol phosphate synthase (264 aa).

The protein belongs to the TrpC family.

It catalyses the reaction 1-(2-carboxyphenylamino)-1-deoxy-D-ribulose 5-phosphate + H(+) = (1S,2R)-1-C-(indol-3-yl)glycerol 3-phosphate + CO2 + H2O. It functions in the pathway amino-acid biosynthesis; L-tryptophan biosynthesis; L-tryptophan from chorismate: step 4/5. The chain is Indole-3-glycerol phosphate synthase from Albidiferax ferrireducens (strain ATCC BAA-621 / DSM 15236 / T118) (Rhodoferax ferrireducens).